The following is a 447-amino-acid chain: Kynureninase (447 aa).

Residues leucine 106, threonine 107, 134–137, aspartate 220, histidine 223, and tyrosine 245 contribute to the pyridoxal 5'-phosphate site; that span reads FPSD. Lysine 246 is subject to N6-(pyridoxal phosphate)lysine. Positions 275 and 303 each coordinate pyridoxal 5'-phosphate.

This sequence belongs to the kynureninase family. Homodimer. The cofactor is pyridoxal 5'-phosphate.

It is found in the cytoplasm. The catalysed reaction is L-kynurenine + H2O = anthranilate + L-alanine + H(+). It carries out the reaction 3-hydroxy-L-kynurenine + H2O = 3-hydroxyanthranilate + L-alanine + H(+). It participates in amino-acid degradation; L-kynurenine degradation; L-alanine and anthranilate from L-kynurenine: step 1/1. It functions in the pathway cofactor biosynthesis; NAD(+) biosynthesis; quinolinate from L-kynurenine: step 2/3. Catalyzes the cleavage of L-kynurenine (L-Kyn) and L-3-hydroxykynurenine (L-3OHKyn) into anthranilic acid (AA) and 3-hydroxyanthranilic acid (3-OHAA), respectively. This is Kynureninase from Eremothecium gossypii (strain ATCC 10895 / CBS 109.51 / FGSC 9923 / NRRL Y-1056) (Yeast).